The following is a 355-amino-acid chain: Dihydroorotate dehydrogenase (quinone) (355 aa).

FMN contacts are provided by residues 68-72 and Thr92; that span reads AGFDK. Lys72 is a binding site for substrate. 117–121 is a substrate binding site; the sequence is NRMGF. Residues Asn154 and Asn190 each contribute to the FMN site. Asn190 provides a ligand contact to substrate. Catalysis depends on Ser193, which acts as the Nucleophile. Asn195 serves as a coordination point for substrate. Positions 232 and 260 each coordinate FMN. Residue 261–262 participates in substrate binding; the sequence is NT. FMN-binding positions include Gly286, Gly315, and 336-337; that span reads YS.

Belongs to the dihydroorotate dehydrogenase family. Type 2 subfamily. As to quaternary structure, monomer. It depends on FMN as a cofactor.

It is found in the cell membrane. The catalysed reaction is (S)-dihydroorotate + a quinone = orotate + a quinol. The protein operates within pyrimidine metabolism; UMP biosynthesis via de novo pathway; orotate from (S)-dihydroorotate (quinone route): step 1/1. Catalyzes the conversion of dihydroorotate to orotate with quinone as electron acceptor. In Nocardioides sp. (strain ATCC BAA-499 / JS614), this protein is Dihydroorotate dehydrogenase (quinone).